We begin with the raw amino-acid sequence, 413 residues long: Multifunctional CCA protein (413 aa).

Glycine 8 and arginine 11 together coordinate ATP. Residues glycine 8 and arginine 11 each contribute to the CTP site. 2 residues coordinate Mg(2+): aspartate 21 and aspartate 23. Residues arginine 91, arginine 143, and arginine 146 each contribute to the ATP site. The CTP site is built by arginine 91, arginine 143, and arginine 146. The 102-residue stretch at 232–333 (TGVHVMMVID…VRLLERADAL (102 aa)) folds into the HD domain.

The protein belongs to the tRNA nucleotidyltransferase/poly(A) polymerase family. Bacterial CCA-adding enzyme type 1 subfamily. In terms of assembly, monomer. Can also form homodimers and oligomers. Requires Mg(2+) as cofactor. Ni(2+) is required as a cofactor.

It carries out the reaction a tRNA precursor + 2 CTP + ATP = a tRNA with a 3' CCA end + 3 diphosphate. The catalysed reaction is a tRNA with a 3' CCA end + 2 CTP + ATP = a tRNA with a 3' CCACCA end + 3 diphosphate. Functionally, catalyzes the addition and repair of the essential 3'-terminal CCA sequence in tRNAs without using a nucleic acid template. Adds these three nucleotides in the order of C, C, and A to the tRNA nucleotide-73, using CTP and ATP as substrates and producing inorganic pyrophosphate. tRNA 3'-terminal CCA addition is required both for tRNA processing and repair. Also involved in tRNA surveillance by mediating tandem CCA addition to generate a CCACCA at the 3' terminus of unstable tRNAs. While stable tRNAs receive only 3'-terminal CCA, unstable tRNAs are marked with CCACCA and rapidly degraded. The sequence is that of Multifunctional CCA protein from Burkholderia pseudomallei (strain K96243).